The sequence spans 185 residues: Elongation factor P (185 aa).

This sequence belongs to the elongation factor P family.

The protein resides in the cytoplasm. Its pathway is protein biosynthesis; polypeptide chain elongation. Its function is as follows. Involved in peptide bond synthesis. Stimulates efficient translation and peptide-bond synthesis on native or reconstituted 70S ribosomes in vitro. Probably functions indirectly by altering the affinity of the ribosome for aminoacyl-tRNA, thus increasing their reactivity as acceptors for peptidyl transferase. The chain is Elongation factor P from Metamycoplasma arthritidis (strain 158L3-1) (Mycoplasma arthritidis).